The chain runs to 331 residues: Mitochondrial respiration co-chaperone MRJ1 (331 aa).

Residues 1–36 (MLSFQATVRPLAVSSRLHSPAAHIWRRNAHTAAMSD) constitute a mitochondrion transit peptide. The disordered stretch occupies residues 35-66 (SDDSLDQGSSSSYGDSASQPHLGKGKGRQDSL). The span at 40–53 (DQGSSSSYGDSASQ) shows a compositional bias: low complexity. The 65-residue stretch at 83–147 (DPFEVMALDR…SSRSAFLKTG (65 aa)) folds into the J domain. The disordered stretch occupies residues 203-226 (DGSQGWRPYEDPSKGFSPPTSGPA). Residues 275–303 (RALAQARYEAATHGHIRREQIRRRVREAE) form the IQ domain.

This sequence belongs to the DnaJ family. As to quaternary structure, interacts with QCR2.

It is found in the mitochondrion. Mitochondrial co-chaperone required for ubiquinol-cytochrome c oxidoreductase (mitochondrial respiratory chain complex III) activity. The chain is Mitochondrial respiration co-chaperone MRJ1 from Cryptococcus neoformans var. grubii serotype A (strain H99 / ATCC 208821 / CBS 10515 / FGSC 9487) (Filobasidiella neoformans var. grubii).